Reading from the N-terminus, the 220-residue chain is Adenylate kinase (220 aa).

10-15 contacts ATP; the sequence is GSGKST. Positions 30-59 are NMP; sequence SSGDLIRKEIAEGTPLGREMQAYLARGDLI. AMP contacts are provided by residues Ser-31, Arg-36, 57 to 59, 83 to 86, and Gln-90; these read DLI and GYPR. The LID stretch occupies residues 124–161; the sequence is GRRICPKCGAVYHVEFNPPKIPGRCDVCGAELVQREDD. Arg-125 provides a ligand contact to ATP. Positions 128 and 131 each coordinate Zn(2+). An ATP-binding site is contributed by 134-135; sequence VY. Residues Cys-148 and Cys-151 each contribute to the Zn(2+) site. 2 residues coordinate AMP: Arg-158 and Arg-169. Residue Gly-197 coordinates ATP.

This sequence belongs to the adenylate kinase family. Monomer.

The protein resides in the cytoplasm. It carries out the reaction AMP + ATP = 2 ADP. The protein operates within purine metabolism; AMP biosynthesis via salvage pathway; AMP from ADP: step 1/1. Its function is as follows. Catalyzes the reversible transfer of the terminal phosphate group between ATP and AMP. Plays an important role in cellular energy homeostasis and in adenine nucleotide metabolism. The sequence is that of Adenylate kinase from Pyrococcus furiosus (strain ATCC 43587 / DSM 3638 / JCM 8422 / Vc1).